Here is a 111-residue protein sequence, read N- to C-terminus: Disintegrin Eo1 subunit 1 (111 aa).

The first 20 residues, 1–20 (MIQVLLVIICLAVFPYQGSS), serve as a signal peptide directing secretion. Residues 21–46 (IILESGNVNDFELVYPKKVTVLPTGA) constitute a propeptide that is removed on maturation. The Disintegrin domain occupies 26–111 (GNVNDFELVY…SDCPRNPWKD (86 aa)). Intrachain disulfides connect C53-C76, C67-C73, C72-C97, and C85-C104. The Cell attachment site; atypical (WGD) signature appears at 89–91 (WGD). Positions 110 to 111 (KD) are excised as a propeptide.

This sequence belongs to the disintegrin family. Dimeric disintegrin subfamily. As to quaternary structure, heterodimer; disulfide-linked. Expressed by the venom gland.

Its subcellular location is the secreted. In terms of biological role, poor inhibitor of platelet aggregation. The disintegrin inhibits the adhesion of cells expressing the RGD-dependent integrin alpha-5/beta-1 (ITGA5/ITGB1) to immobilized fibronectin. Inhibition on alpha-IIb/beta-3 (ITGA2B/ITGB3) is low. In Echis ocellatus (Ocellated saw-scaled viper), this protein is Disintegrin Eo1 subunit 1.